The primary structure comprises 291 residues: Acetyl-coenzyme A carboxylase carboxyl transferase subunit beta (291 aa).

One can recognise a CoA carboxyltransferase N-terminal domain in the interval 29-291; the sequence is IMTKCPDCKK…TGGDLEWLEN (263 aa). Zn(2+)-binding residues include C33, C36, C52, and C55. The C4-type zinc-finger motif lies at 33–55; it reads CPDCKKIMLTKELDKNLRVCMNC.

This sequence belongs to the AccD/PCCB family. As to quaternary structure, acetyl-CoA carboxylase is a heterohexamer composed of biotin carboxyl carrier protein (AccB), biotin carboxylase (AccC) and two subunits each of ACCase subunit alpha (AccA) and ACCase subunit beta (AccD). Zn(2+) is required as a cofactor.

Its subcellular location is the cytoplasm. It carries out the reaction N(6)-carboxybiotinyl-L-lysyl-[protein] + acetyl-CoA = N(6)-biotinyl-L-lysyl-[protein] + malonyl-CoA. It functions in the pathway lipid metabolism; malonyl-CoA biosynthesis; malonyl-CoA from acetyl-CoA: step 1/1. In terms of biological role, component of the acetyl coenzyme A carboxylase (ACC) complex. Biotin carboxylase (BC) catalyzes the carboxylation of biotin on its carrier protein (BCCP) and then the CO(2) group is transferred by the transcarboxylase to acetyl-CoA to form malonyl-CoA. This chain is Acetyl-coenzyme A carboxylase carboxyl transferase subunit beta, found in Bacillus licheniformis (strain ATCC 14580 / DSM 13 / JCM 2505 / CCUG 7422 / NBRC 12200 / NCIMB 9375 / NCTC 10341 / NRRL NRS-1264 / Gibson 46).